A 482-amino-acid polypeptide reads, in one-letter code: GTPase Obg (482 aa).

The 158-residue stretch at 2 to 159 (PRFVDRVVIH…VDLTLELKTV (158 aa)) folds into the Obg domain. Residues 160–340 (ADVGLVGFPS…LTFALWEMIV (181 aa)) form the OBG-type G domain. GTP is bound by residues 166–173 (GFPSAGKS), 191–195 (FTTLV), 212–215 (DVPG), 292–295 (NKVD), and 321–323 (STL). Residues Ser-173 and Thr-193 each contribute to the Mg(2+) site. Residues 358–438 (PIPVDESGFT…IGDMTFDWEP (81 aa)) form the OCT domain. Residues 441-482 (PAGVDVTMSGRGTDARIDKTDRVGAAERRQARRVRRGQVEPE) are disordered. Residues 453 to 469 (TDARIDKTDRVGAAERR) show a composition bias toward basic and acidic residues.

The protein belongs to the TRAFAC class OBG-HflX-like GTPase superfamily. OBG GTPase family. Monomer. Mg(2+) serves as cofactor.

The protein localises to the cytoplasm. Functionally, an essential GTPase which binds GTP, GDP and possibly (p)ppGpp with moderate affinity, with high nucleotide exchange rates and a fairly low GTP hydrolysis rate. Plays a role in control of the cell cycle, stress response, ribosome biogenesis and in those bacteria that undergo differentiation, in morphogenesis control. This chain is GTPase Obg, found in Mycobacteroides abscessus (strain ATCC 19977 / DSM 44196 / CCUG 20993 / CIP 104536 / JCM 13569 / NCTC 13031 / TMC 1543 / L948) (Mycobacterium abscessus).